Reading from the N-terminus, the 234-residue chain is Ribonuclease HII (234 aa).

Residues 30–221 enclose the RNase H type-2 domain; that stretch reads GPVAGVDEAG…VRNAAMGSSL (192 aa). A divalent metal cation is bound by residues aspartate 36, glutamate 37, and aspartate 130.

Belongs to the RNase HII family. Mn(2+) is required as a cofactor. The cofactor is Mg(2+).

It localises to the cytoplasm. It carries out the reaction Endonucleolytic cleavage to 5'-phosphomonoester.. In terms of biological role, endonuclease that specifically degrades the RNA of RNA-DNA hybrids. The protein is Ribonuclease HII of Mycobacteroides abscessus (strain ATCC 19977 / DSM 44196 / CCUG 20993 / CIP 104536 / JCM 13569 / NCTC 13031 / TMC 1543 / L948) (Mycobacterium abscessus).